Reading from the N-terminus, the 246-residue chain is Ribonuclease PH (246 aa).

Residues R91 and 129–131 (GTR) contribute to the phosphate site.

Belongs to the RNase PH family. In terms of assembly, homohexameric ring arranged as a trimer of dimers.

It catalyses the reaction tRNA(n+1) + phosphate = tRNA(n) + a ribonucleoside 5'-diphosphate. Functionally, phosphorolytic 3'-5' exoribonuclease that plays an important role in tRNA 3'-end maturation. Removes nucleotide residues following the 3'-CCA terminus of tRNAs; can also add nucleotides to the ends of RNA molecules by using nucleoside diphosphates as substrates, but this may not be physiologically important. Probably plays a role in initiation of 16S rRNA degradation (leading to ribosome degradation) during starvation. This Burkholderia cenocepacia (strain ATCC BAA-245 / DSM 16553 / LMG 16656 / NCTC 13227 / J2315 / CF5610) (Burkholderia cepacia (strain J2315)) protein is Ribonuclease PH.